The following is a 214-amino-acid chain: Adenylate kinase (214 aa).

An ATP-binding site is contributed by 10-15 (GAGKGT). Residues 30-59 (STGDMLRAAVKAGTPLGLEAKKVMDAGQLV) form an NMP region. AMP is bound by residues Thr31, Arg36, 57–59 (QLV), 85–88 (GFPR), and Gln92. Residues 122–159 (GRRVHPGSGRVYHVVFNPPKVEGKDDVTGEDLAIRPDD) form an LID region. ATP contacts are provided by residues Arg123 and 132–133 (VY). Residues Arg156 and Arg167 each contribute to the AMP site. Residue Gln200 coordinates ATP.

The protein belongs to the adenylate kinase family. Monomer.

It is found in the cytoplasm. The enzyme catalyses AMP + ATP = 2 ADP. Its pathway is purine metabolism; AMP biosynthesis via salvage pathway; AMP from ADP: step 1/1. Functionally, catalyzes the reversible transfer of the terminal phosphate group between ATP and AMP. Plays an important role in cellular energy homeostasis and in adenine nucleotide metabolism. The polypeptide is Adenylate kinase (Shewanella oneidensis (strain ATCC 700550 / JCM 31522 / CIP 106686 / LMG 19005 / NCIMB 14063 / MR-1)).